Reading from the N-terminus, the 244-residue chain is 7-cyano-7-deazaguanine synthase (244 aa).

Position 14-24 (14-24) interacts with ATP; that stretch reads FSGGQDSATCL. Zn(2+) contacts are provided by Cys-202, Cys-217, Cys-220, and Cys-223.

The protein belongs to the QueC family. The cofactor is Zn(2+).

It catalyses the reaction 7-carboxy-7-deazaguanine + NH4(+) + ATP = 7-cyano-7-deazaguanine + ADP + phosphate + H2O + H(+). It functions in the pathway purine metabolism; 7-cyano-7-deazaguanine biosynthesis. Catalyzes the ATP-dependent conversion of 7-carboxy-7-deazaguanine (CDG) to 7-cyano-7-deazaguanine (preQ(0)). The polypeptide is 7-cyano-7-deazaguanine synthase (Paraburkholderia phytofirmans (strain DSM 17436 / LMG 22146 / PsJN) (Burkholderia phytofirmans)).